A 793-amino-acid polypeptide reads, in one-letter code: Protein translocase subunit SecA 2 (793 aa).

ATP is bound by residues Gln-77, 95 to 99 (GEGKT), and Asp-493.

It belongs to the SecA family. As to quaternary structure, monomer and homodimer. Part of the essential Sec protein translocation apparatus which comprises SecA, SecYEG and auxiliary proteins SecDF. Other proteins may also be involved.

Its subcellular location is the cell membrane. The protein resides in the cytoplasm. It catalyses the reaction ATP + H2O + cellular proteinSide 1 = ADP + phosphate + cellular proteinSide 2.. Its function is as follows. Part of the Sec protein translocase complex. Interacts with the SecYEG preprotein conducting channel. Has a central role in coupling the hydrolysis of ATP to the transfer of proteins into and across the cell membrane, serving as an ATP-driven molecular motor driving the stepwise translocation of polypeptide chains across the membrane. In Streptococcus sanguinis (strain SK36), this protein is Protein translocase subunit SecA 2.